The chain runs to 204 residues: Holliday junction branch migration complex subunit RuvA (204 aa).

The tract at residues 1 to 64 is domain I; the sequence is MIGRLRGIIL…EDAQLLYGFN (64 aa). Positions 65–142 are domain II; the sequence is NKQERALFRE…KGLNGDLFNN (78 aa). The interval 143–155 is flexible linker; sequence TGDISLPTASPQT. A domain III region spans residues 156–204; sequence SDADIEAEAASALVALGYKPQEASRLVSKIAKPGADCETLIRDALRAAL.

The protein belongs to the RuvA family. In terms of assembly, homotetramer. Forms an RuvA(8)-RuvB(12)-Holliday junction (HJ) complex. HJ DNA is sandwiched between 2 RuvA tetramers; dsDNA enters through RuvA and exits via RuvB. An RuvB hexamer assembles on each DNA strand where it exits the tetramer. Each RuvB hexamer is contacted by two RuvA subunits (via domain III) on 2 adjacent RuvB subunits; this complex drives branch migration. In the full resolvosome a probable DNA-RuvA(4)-RuvB(12)-RuvC(2) complex forms which resolves the HJ.

It is found in the cytoplasm. In terms of biological role, the RuvA-RuvB-RuvC complex processes Holliday junction (HJ) DNA during genetic recombination and DNA repair, while the RuvA-RuvB complex plays an important role in the rescue of blocked DNA replication forks via replication fork reversal (RFR). RuvA specifically binds to HJ cruciform DNA, conferring on it an open structure. The RuvB hexamer acts as an ATP-dependent pump, pulling dsDNA into and through the RuvAB complex. HJ branch migration allows RuvC to scan DNA until it finds its consensus sequence, where it cleaves and resolves the cruciform DNA. The chain is Holliday junction branch migration complex subunit RuvA from Yersinia pseudotuberculosis serotype O:1b (strain IP 31758).